The sequence spans 1154 residues: MEPSDSASTAMEEPDSLEVLVKTLDSQTRTFIVGAQMNVKEFKEHIAASVSIPSEKQRLIYQGRVLQDDKKLQEYNVGGKVIHLVERAPPQTQLPSGASSGTGSASATHGGAPLPGTRGPGASVHDRNANSYVMVGTFNLPSDGSAVDVHINMEQAPIQSEPRVRLVMAQHMIRDIQTLLSRMECRGGTQAQASQPPPQTPQTVASETVALNSQTSEPVESEAPPREPMESEEMEERPPTQTPELAPSGPAPAGPAPAGPAPAPETNAPNHPSPAEHVEVLQELQRLQRRLQPFLQRYCEVLGAAATTDYNNNHEGREEDQRLINLVGESLRLLGNTFVALSDLRCNLACAPPRHLHVVRPMSHYTTPMVLQQAAIPIQINVGTTVTMTGNGARPPPAPGAEAATPGSAQATSLPPSSTTVDSSTEGAPPPGPAPPPASSHPRVIRISHQSVEPVVMMHMNIQDSGAQPGGVPSAPTGPLGPPGHGQTLGQQVPGFPTAPTRVVIARPTPPQARPSHPGGPPVSGALQGAGLGTNTSLAQMVSGLVGQLLMQPVLVAQGTPGMAQAQAQAQAQAQAQAQAPAPAPAPAPAPATASASAGTTNTATTAGPAPGGPAQPPPPQPSAADLQFSQLLGNLLGPAGPGAGGPGMASPTITVAMPGVPAFLQGMTDFLQASQTAPPPPPPPPPPPPAPEQQSTPPPGSPSGGTASPGGLGPESLPPEFFTSVVQGVLSSLLGSLGARAGSSESIAAFIQRLSGSSNIFEPGADGALGFFGALLSLLCQNFSMVDVVMLLHGHFQPLQRLQPQLRSFFHQHYLGGQEPTPSNIRMATHTLITGLEEYVRESFSLVQVQPGVDIIRTNLEFLQEQFNSIAAHVLHCTDSGFGARLLELCNQGLFECLALNLHCLGGQQMELAAVINGRIRRMSRGVNPSLVSWLTTMMGLRLQVVLEHMPVGPDAILRYVRRVGDPPQTLPEEPMEVQGAERTSPEPQRENASPAPGTTAEEAMSRGPPPAPEGGSRDEQDGASADAEPWAAAVPPEWVPIIQQDIQSQRKVKPQPPLSDAYLSGMPAKRRKTMQGEGPQLLLSEAVSRAAKAAGARPLTSPESLSRDLEAPEVQESYRQQLRSDIQKRLQEDPNYSPQRFPNAHRAFADDP.

The residue at position 1 (M1) is an N-acetylmethionine. The 76-residue stretch at 17–92 folds into the Ubiquitin-like domain; the sequence is LEVLVKTLDS…HLVERAPPQT (76 aa). 5 disordered regions span residues 87–125, 186–274, 387–442, 463–531, and 568–626; these read RAPP…ASVH, RGGT…HPSP, TMTG…SSHP, QDSG…QGAG, and AQAQ…SAAD. Position 96 is a phosphoserine (S96). Low complexity predominate over residues 96–112; the sequence is SGASSGTGSASATHGGA. At T117 the chain carries Phosphothreonine. Polar residues predominate over residues 209–218; that stretch reads VALNSQTSEP. Repeat unit 1 spans residues 237 to 271; the sequence is RPPTQTPELAPSGPAPAGPAPAGPAPAPETNAPNH. The 4 X 29 AA approximate repeats stretch occupies residues 237–658; sequence RPPTQTPELA…MASPTITVAM (422 aa). The segment covering 249–263 has biased composition (pro residues); that stretch reads GPAPAGPAPAGPAPA. Positions 400–409 are enriched in low complexity; it reads GAEAATPGSA. Polar residues predominate over residues 410-426; it reads QATSLPPSSTTVDSSTE. Repeat unit 2 spans residues 416–444; that stretch reads PSSTTVDSSTEGAPPPGPAPPPASSHPRV. 2 stretches are compositionally biased toward pro residues: residues 428–439 and 508–521; these read APPPGPAPPPAS and PTPP…PGGP. Composition is skewed to low complexity over residues 568–581 and 591–609; these read AQAQ…AQAP and PATA…TAGP. 2 consecutive repeat copies span residues 597–624 and 630–658. Positions 611-622 are enriched in pro residues; that stretch reads PGGPAQPPPPQP. 2 disordered regions span residues 673-719 and 968-1154; these read QASQ…ESLP and PPQT…ADDP. Pro residues predominate over residues 678 to 702; it reads APPPPPPPPPPPPAPEQQSTPPPGS. Phosphoserine occurs at positions 986 and 995. Residues 1029–1042 show a composition bias toward low complexity; sequence AEPWAAAVPPEWVP. The segment at 1032 to 1062 is required for interaction with GET4; sequence WAAAVPPEWVPIIQQDIQSQRKVKPQPPLSD. A Nuclear localization site motif is present at residues 1034–1076; it reads AAVPPEWVPIIQQDIQSQRKVKPQPPLSDAYLSGMPAKRRKTM. The interval 1044-1154 is sufficient for the delivery of client proteins to the endoplasmic reticulum; the sequence is IQQDIQSQRK…NAHRAFADDP (111 aa). T1075 carries the post-translational modification Phosphothreonine. Positions 1080 to 1137 are BAG-similar domain, required and sufficient for interaction with UBL4A; it reads GPQLLLSEAVSRAAKAAGARPLTSPESLSRDLEAPEVQESYRQQLRSDIQKRLQEDPN. The span at 1088-1098 shows a compositional bias: low complexity; it reads AVSRAAKAAGA. Phosphoserine is present on residues S1103 and S1139.

In terms of assembly, component of the BAG6/BAT3 complex, also named BAT3 complex, at least composed of BAG6, UBL4A and GET4/TRC35. Interacts with GET4; the interaction is direct and localizes BAG6 in the cytosol. Interacts with UBL4A; the interaction is direct and required for UBL4A protein stability. Interacts with AIFM1. Interacts with HSPA2. Interacts with CTCFL. Interacts with p300/EP300. Interacts (via ubiquitin-like domain) with RNF126; required for BAG6-dependent ubiquitination of proteins mislocalized to the cytosol. Interacts (via ubiquitin-like domain) with SGTA; SGTA competes with RNF126 by binding the same region of BAG6, thereby promoting deubiquitination of BAG6-target proteins and rescuing them from degradation. Interacts with ricin A chain. Interacts with VCP and AMFR; both form the VCP/p97-AMFR/gp78 complex. Interacts with SYVN1. Interacts with USP13; the interaction is direct and may mediate UBL4A deubiquitination. Interacts with ZFAND2B. Interacts with KPNA2. Interacts with UBQLN4. Ricin can induce a cleavage by the caspase CASP3. The released C-terminal peptide induces apoptosis.

It is found in the cytoplasm. Its subcellular location is the cytosol. The protein resides in the nucleus. It localises to the secreted. The protein localises to the extracellular exosome. In terms of biological role, ATP-independent molecular chaperone preventing the aggregation of misfolded and hydrophobic patches-containing proteins. Functions as part of a cytosolic protein quality control complex, the BAG6/BAT3 complex, which maintains these client proteins in a soluble state and participates in their proper delivery to the endoplasmic reticulum or alternatively can promote their sorting to the proteasome where they undergo degradation. The BAG6/BAT3 complex is involved in the post-translational delivery of tail-anchored/type II transmembrane proteins to the endoplasmic reticulum membrane. Recruited to ribosomes, it interacts with the transmembrane region of newly synthesized tail-anchored proteins and together with SGTA and ASNA1 mediates their delivery to the endoplasmic reticulum. Client proteins that cannot be properly delivered to the endoplasmic reticulum are ubiquitinated by RNF126, an E3 ubiquitin-protein ligase associated with BAG6 and are sorted to the proteasome. SGTA which prevents the recruitment of RNF126 to BAG6 may negatively regulate the ubiquitination and the proteasomal degradation of client proteins. Similarly, the BAG6/BAT3 complex also functions as a sorting platform for proteins of the secretory pathway that are mislocalized to the cytosol either delivering them to the proteasome for degradation or to the endoplasmic reticulum. The BAG6/BAT3 complex also plays a role in the endoplasmic reticulum-associated degradation (ERAD), a quality control mechanism that eliminates unwanted proteins of the endoplasmic reticulum through their retrotranslocation to the cytosol and their targeting to the proteasome. It maintains these retrotranslocated proteins in an unfolded yet soluble state condition in the cytosol to ensure their proper delivery to the proteasome. BAG6 is also required for selective ubiquitin-mediated degradation of defective nascent chain polypeptides by the proteasome. In this context, it may participate in the production of antigenic peptides and play a role in antigen presentation in immune response. BAG6 is also involved in endoplasmic reticulum stress-induced pre-emptive quality control, a mechanism that selectively attenuates the translocation of newly synthesized proteins into the endoplasmic reticulum and reroutes them to the cytosol for proteasomal degradation. BAG6 may ensure the proper degradation of these proteins and thereby protects the endoplasmic reticulum from protein overload upon stress. By inhibiting the polyubiquitination and subsequent proteasomal degradation of HSPA2 it may also play a role in the assembly of the synaptonemal complex during spermatogenesis. Also positively regulates apoptosis by interacting with and stabilizing the proapoptotic factor AIFM1. By controlling the steady-state expression of the IGF1R receptor, indirectly regulates the insulin-like growth factor receptor signaling pathway. Involved in DNA damage-induced apoptosis: following DNA damage, accumulates in the nucleus and forms a complex with p300/EP300, enhancing p300/EP300-mediated p53/TP53 acetylation leading to increase p53/TP53 transcriptional activity. When nuclear, may also act as a component of some chromatin regulator complex that regulates histone 3 'Lys-4' dimethylation (H3K4me2). Its function is as follows. Released extracellularly via exosomes, it is a ligand of the natural killer/NK cells receptor NCR3 and stimulates NK cells cytotoxicity. It may thereby trigger NK cells cytotoxicity against neighboring tumor cells and immature myeloid dendritic cells (DC). Functionally, may mediate ricin-induced apoptosis. The protein is Large proline-rich protein BAG6 of Mus musculus (Mouse).